Consider the following 329-residue polypeptide: Haptoglobin (329 aa).

N-linked (GlcNAc...) asparagine glycosylation occurs at N9. The 58-residue stretch at 13–70 (VSLPKPPVIENGYVEHMIRYQCKPFYKLHTEGDGVYTLNSEKHWTNKAVGEKLPECEA) folds into the Sushi domain. Intrachain disulfides connect C34-C68 and C72-C189. A propeptide is located at residue R84. One can recognise a Peptidase S1 domain in the interval 85–327 (IMGGSVDAKG…VLAWVQETIA (243 aa)). N-linked (GlcNAc...) asparagine glycosylation is found at N107 and N214. 2 cysteine pairs are disulfide-bonded: C232-C263 and C274-C304. The tract at residues 241 to 246 (VPEKKS) is interaction with CD163.

It belongs to the peptidase S1 family. Tetramer of two alpha and two beta chains; disulfide-linked. The hemoglobin/haptoglobin complex is composed of a haptoglobin dimer bound to two hemoglobin alpha-beta dimers. Interacts with CD163. Interacts with ERGIC3. Expressed by the liver and secreted in plasma.

It is found in the secreted. The protein resides in the extracellular space. Functionally, as a result of hemolysis, hemoglobin is found to accumulate in the kidney and is secreted in the urine. Haptoglobin captures, and combines with free plasma hemoglobin to allow hepatic recycling of heme iron and to prevent kidney damage. Haptoglobin also acts as an antioxidant, has antibacterial activity and plays a role in modulating many aspects of the acute phase response. Hemoglobin/haptoglobin complexes are rapidly cleared by the macrophage CD163 scavenger receptor expressed on the surface of liver Kupfer cells through an endocytic lysosomal degradation pathway. This chain is Haptoglobin (HP), found in Canis lupus familiaris (Dog).